Here is a 200-residue protein sequence, read N- to C-terminus: uncharacterized protein (200 aa).

A signal peptide spans 1–24 (MSRVFSCVLRACVCAGLCCWVCMG). The disordered stretch occupies residues 124–200 (GGRDLPMHGA…GEGGDNGEGE (77 aa)). The segment covering 184–200 (LGDEGETGEGGDNGEGE) has biased composition (acidic residues).

This is an uncharacterized protein from Homo sapiens (Human).